Consider the following 372-residue polypeptide: N-methyl-L-tryptophan oxidase (372 aa).

An FAD-binding site is contributed by 4-34 (DLIIIGSGSVGAAAGYYATRAGLNVLMTDAH). C308 is subject to S-8alpha-FAD cysteine.

The protein belongs to the MSOX/MTOX family. MTOX subfamily. As to quaternary structure, monomer. FAD is required as a cofactor.

It carries out the reaction N(alpha)-methyl-L-tryptophan + O2 + H2O = L-tryptophan + formaldehyde + H2O2. Functionally, catalyzes the oxidative demethylation of N-methyl-L-tryptophan. This Escherichia coli O127:H6 (strain E2348/69 / EPEC) protein is N-methyl-L-tryptophan oxidase.